Here is a 244-residue protein sequence, read N- to C-terminus: Probable transcriptional regulatory protein XF_1906 (244 aa).

Belongs to the TACO1 family.

It localises to the cytoplasm. The polypeptide is Probable transcriptional regulatory protein XF_1906 (Xylella fastidiosa (strain 9a5c)).